The chain runs to 149 residues: Evolved beta-galactosidase subunit beta (149 aa).

In terms of assembly, heterooctamer of 4 alpha and 4 beta subunits.

Required for full activity of the EbgA enzyme. Exact function not known. In Escherichia coli O6:H1 (strain CFT073 / ATCC 700928 / UPEC), this protein is Evolved beta-galactosidase subunit beta (ebgC).